We begin with the raw amino-acid sequence, 427 residues long: MLDTVAPSPDIDALMNDIGRKAKAAARPLGFASTEAKNKALNAMADAIMANKAHILAENAKDLKDIEGSETLASFVDRLTLNDKRIAEMAEGIRAIAALADPVGEVIAAWDRPNGLKIERVRTPLGVIGVIFESRPNVTADAGALCLKAGNAVILRCGSDSRRSSQAIHVCMVEGLKAAGLPEHAIQLVPVTDRAAVGAMLRGLEGAIDVIVPRGGKSLVARVQNEARVPVFAHLEGLCHIYVDASADLEMAKKIVVNAKMRRTGICGAAETLLVDGAAIDTHLTPLLEVLTDAGCEIRASAAVLKVAPGLKTATEEDWSTEYLDAIISVATVDGISGAIAHIQTYSSNHTEAVIAEDPAVVQRFFTEVDSAILLHNASTQFADGGEFGMGAEIGIATGKMHARGPVGVEQLTSFKYRVRGAGQTRP.

It belongs to the gamma-glutamyl phosphate reductase family.

The protein resides in the cytoplasm. It catalyses the reaction L-glutamate 5-semialdehyde + phosphate + NADP(+) = L-glutamyl 5-phosphate + NADPH + H(+). The protein operates within amino-acid biosynthesis; L-proline biosynthesis; L-glutamate 5-semialdehyde from L-glutamate: step 2/2. Functionally, catalyzes the NADPH-dependent reduction of L-glutamate 5-phosphate into L-glutamate 5-semialdehyde and phosphate. The product spontaneously undergoes cyclization to form 1-pyrroline-5-carboxylate. The sequence is that of Gamma-glutamyl phosphate reductase from Rhizobium etli (strain ATCC 51251 / DSM 11541 / JCM 21823 / NBRC 15573 / CFN 42).